A 485-amino-acid polypeptide reads, in one-letter code: Inosine-5'-monophosphate dehydrogenase (485 aa).

CBS domains follow at residues 99 to 154 and 156 to 215; these read IVED…LVKE and MTKD…VRDE. Residues Asp247 and 294–296 each bind NAD(+); that span reads GIG. 2 residues coordinate K(+): Gly296 and Gly298. An IMP-binding site is contributed by Ser299. K(+) is bound at residue Cys301. Cys301 serves as the catalytic Thioimidate intermediate. IMP-binding positions include 334 to 336, 357 to 358, and 381 to 385; these read DGG, GN, and YRGMG. Arg397 serves as the catalytic Proton acceptor. Glu412 lines the IMP pocket. The K(+) site is built by Glu466, Ser467, and His468.

This sequence belongs to the IMPDH/GMPR family. In terms of assembly, homotetramer. It depends on K(+) as a cofactor.

It carries out the reaction IMP + NAD(+) + H2O = XMP + NADH + H(+). It functions in the pathway purine metabolism; XMP biosynthesis via de novo pathway; XMP from IMP: step 1/1. Its activity is regulated as follows. Mycophenolic acid (MPA) is a non-competitive inhibitor that prevents formation of the closed enzyme conformation by binding to the same site as the amobile flap. In contrast, mizoribine monophosphate (MZP) is a competitive inhibitor that induces the closed conformation. MPA is a potent inhibitor of mammalian IMPDHs but a poor inhibitor of the bacterial enzymes. MZP is a more potent inhibitor of bacterial IMPDH. Catalyzes the conversion of inosine 5'-phosphate (IMP) to xanthosine 5'-phosphate (XMP), the first committed and rate-limiting step in the de novo synthesis of guanine nucleotides, and therefore plays an important role in the regulation of cell growth. This Pyrococcus abyssi (strain GE5 / Orsay) protein is Inosine-5'-monophosphate dehydrogenase.